Consider the following 310-residue polypeptide: Malate dehydrogenase (310 aa).

NAD(+) contacts are provided by residues 7 to 12 (GAGNVG) and Asp32. Substrate contacts are provided by Arg81 and Arg87. NAD(+) contacts are provided by residues Asn94 and 117–119 (VSN). The substrate site is built by Asn119 and Arg150. The active-site Proton acceptor is His174.

It belongs to the LDH/MDH superfamily. MDH type 3 family.

It carries out the reaction (S)-malate + NAD(+) = oxaloacetate + NADH + H(+). Functionally, catalyzes the reversible oxidation of malate to oxaloacetate. The polypeptide is Malate dehydrogenase (Chlorobium chlorochromatii (strain CaD3)).